The sequence spans 360 residues: Alanine racemase (360 aa).

Lys36 functions as the Proton acceptor; specific for D-alanine in the catalytic mechanism. Position 36 is an N6-(pyridoxal phosphate)lysine (Lys36). A substrate-binding site is contributed by Arg132. Tyr256 serves as the catalytic Proton acceptor; specific for L-alanine. Met304 is a substrate binding site.

This sequence belongs to the alanine racemase family. It depends on pyridoxal 5'-phosphate as a cofactor.

It carries out the reaction L-alanine = D-alanine. It participates in amino-acid biosynthesis; D-alanine biosynthesis; D-alanine from L-alanine: step 1/1. In terms of biological role, catalyzes the interconversion of L-alanine and D-alanine. May also act on other amino acids. This Pasteurella multocida (strain Pm70) protein is Alanine racemase (alr).